We begin with the raw amino-acid sequence, 494 residues long: Aspartyl/glutamyl-tRNA(Asn/Gln) amidotransferase subunit B (494 aa).

The protein belongs to the GatB/GatE family. GatB subfamily. As to quaternary structure, heterotrimer of A, B and C subunits.

The catalysed reaction is L-glutamyl-tRNA(Gln) + L-glutamine + ATP + H2O = L-glutaminyl-tRNA(Gln) + L-glutamate + ADP + phosphate + H(+). The enzyme catalyses L-aspartyl-tRNA(Asn) + L-glutamine + ATP + H2O = L-asparaginyl-tRNA(Asn) + L-glutamate + ADP + phosphate + 2 H(+). In terms of biological role, allows the formation of correctly charged Asn-tRNA(Asn) or Gln-tRNA(Gln) through the transamidation of misacylated Asp-tRNA(Asn) or Glu-tRNA(Gln) in organisms which lack either or both of asparaginyl-tRNA or glutaminyl-tRNA synthetases. The reaction takes place in the presence of glutamine and ATP through an activated phospho-Asp-tRNA(Asn) or phospho-Glu-tRNA(Gln). In Synechococcus sp. (strain CC9605), this protein is Aspartyl/glutamyl-tRNA(Asn/Gln) amidotransferase subunit B.